We begin with the raw amino-acid sequence, 1104 residues long: Receptor-mediated endocytosis protein 6 (1104 aa).

The region spanning 156 to 389 (LKIAQVVCYL…EMMDSLLVEN (234 aa)) is the Ras-GAP domain. The interval 663 to 682 (SSLAKQPSGMVSSASAQNIP) is disordered. One can recognise a VPS9 domain in the interval 966–1104 (QKKDKLLQSV…SAVEYIKTIL (139 aa)).

It belongs to the GAPVD1 family. Interacts with GDP-bound rab-5. Interacts with alpha-adaptin.

Its subcellular location is the membrane. It is found in the cytoplasmic vesicle. The protein localises to the clathrin-coated vesicle. Acts both as a GTPase-activating protein (GAP) and a guanine nucleotide exchange factor (GEF), and participates in endocytosis. Acts by regulating the activation of rab-5 by exchanging bound GDP for free GTP at clathrin coated pits. The polypeptide is Receptor-mediated endocytosis protein 6 (rme-6) (Caenorhabditis briggsae).